Here is a 59-residue protein sequence, read N- to C-terminus: MAKKENRIIITLECTEARKEGLTPSRYTTTKNKKNNTERLVLKKYNPNLKKHTEHKEIK.

Positions 26 to 59 are disordered; that stretch reads RYTTTKNKKNNTERLVLKKYNPNLKKHTEHKEIK.

This sequence belongs to the bacterial ribosomal protein bL33 family.

In Chlorobium phaeobacteroides (strain BS1), this protein is Large ribosomal subunit protein bL33.